A 158-amino-acid polypeptide reads, in one-letter code: Lipoprotein signal peptidase (158 aa).

4 consecutive transmembrane segments (helical) span residues 7–27 (LFWIAAFIAFFVDQLTKYWVV), 38–58 (ILPGIFHFTYVTNTGAAFSLF), 67–87 (WLSLGVSLLLIGLALLGPVLD), and 95–115 (GLILGGAMGNGIDRFALGYVV). Catalysis depends on residues D116 and D132. Residues 125-145 (FAVFNMADSFISIGIVCLLLA) form a helical membrane-spanning segment.

Belongs to the peptidase A8 family.

The protein localises to the cell inner membrane. It carries out the reaction Release of signal peptides from bacterial membrane prolipoproteins. Hydrolyzes -Xaa-Yaa-Zaa-|-(S,diacylglyceryl)Cys-, in which Xaa is hydrophobic (preferably Leu), and Yaa (Ala or Ser) and Zaa (Gly or Ala) have small, neutral side chains.. The protein operates within protein modification; lipoprotein biosynthesis (signal peptide cleavage). In terms of biological role, this protein specifically catalyzes the removal of signal peptides from prolipoproteins. The sequence is that of Lipoprotein signal peptidase from Nostoc sp. (strain PCC 7120 / SAG 25.82 / UTEX 2576).